Consider the following 661-residue polypeptide: MKDRFELVSKYQPQGDQPKAIEKLVKGIQEGKKHQTLLGATGTGKTFTVSNLIKEVNKPTLVIAHNKTLAGQLYSEFKEFFPNNAVEYFVSYYDYYQPEAYVPQTDTFIEKDASINDEIDKLRHSATSALFERRDVIIIASVSCIYGLGSPEEYREMVVSLRTEMEIERNELLRKLVDIQYARNDIDFQRGTFRVRGDVVEIFPASRDEHCVRVEFFGDEIERIREVDALTGEILGDRDHVAIFPASHFVTRAEKMEKAIQNIEKELEEQLKVMHENGKLLEAQRLEQRTRYDLEMMREMGFCSGIENYSRHLTLRPPGSTPYTLLDYFPDDFMIVVDESHVTIPQVRGMFNGDQARKQVLVDHGFRLPSALDNRPLRFEEFEKHMHNIVYVSATPGPYEIEHTDEMVEQIIRPTGLLDPLIDVRPIEGQIDDLIGEIQARIERNERVLVTTLTKKMSEDLTDYLKEIGIKVNYLHSEIKTLERIEIIRDLRLGKYDVLVGINLLREGLDIPEVSLVAILDADKEGFLRSERSLIQTIGRAARNAEGRVIMYADKITKSMEIAINETKRRREQQERFNEEHGITPKTINKEIRDVIRATVAAEDKAEYKTKAAPKLSKMTKKERQKVVEQMEHEMKEAAKALDFERAAELRDLLLELKAEG.

Positions 26-413 (KGIQEGKKHQ…TDEMVEQIIR (388 aa)) constitute a Helicase ATP-binding domain. ATP is bound at residue 39-46 (GATGTGKT). The Beta-hairpin signature appears at 92–115 (YYDYYQPEAYVPQTDTFIEKDASI). The 167-residue stretch at 430 to 596 (QIDDLIGEIQ…TINKEIRDVI (167 aa)) folds into the Helicase C-terminal domain. Positions 625–660 (QKVVEQMEHEMKEAAKALDFERAAELRDLLLELKAE) constitute a UVR domain.

It belongs to the UvrB family. In terms of assembly, forms a heterotetramer with UvrA during the search for lesions. Interacts with UvrC in an incision complex.

The protein localises to the cytoplasm. Its function is as follows. The UvrABC repair system catalyzes the recognition and processing of DNA lesions. A damage recognition complex composed of 2 UvrA and 2 UvrB subunits scans DNA for abnormalities. Upon binding of the UvrA(2)B(2) complex to a putative damaged site, the DNA wraps around one UvrB monomer. DNA wrap is dependent on ATP binding by UvrB and probably causes local melting of the DNA helix, facilitating insertion of UvrB beta-hairpin between the DNA strands. Then UvrB probes one DNA strand for the presence of a lesion. If a lesion is found the UvrA subunits dissociate and the UvrB-DNA preincision complex is formed. This complex is subsequently bound by UvrC and the second UvrB is released. If no lesion is found, the DNA wraps around the other UvrB subunit that will check the other stand for damage. This is UvrABC system protein B from Bacillus subtilis (strain 168).